A 76-amino-acid polypeptide reads, in one-letter code: UPF0291 protein BCE_1981 (76 aa).

The protein belongs to the UPF0291 family.

The protein localises to the cytoplasm. The protein is UPF0291 protein BCE_1981 of Bacillus cereus (strain ATCC 10987 / NRS 248).